The chain runs to 443 residues: Glucose-6-phosphate isomerase (443 aa).

Catalysis depends on E285, which acts as the Proton donor. Catalysis depends on residues H306 and K420.

This sequence belongs to the GPI family.

The protein localises to the cytoplasm. The catalysed reaction is alpha-D-glucose 6-phosphate = beta-D-fructose 6-phosphate. It functions in the pathway carbohydrate biosynthesis; gluconeogenesis. It participates in carbohydrate degradation; glycolysis; D-glyceraldehyde 3-phosphate and glycerone phosphate from D-glucose: step 2/4. In terms of biological role, catalyzes the reversible isomerization of glucose-6-phosphate to fructose-6-phosphate. The chain is Glucose-6-phosphate isomerase from Staphylococcus haemolyticus (strain JCSC1435).